A 100-amino-acid chain; its full sequence is MAKKSMIEREKKRKKLVEKYAEKRRELKEQFMKAEDLEQKIELHRQIQRLPRNSAPSRVRNRCWLTGRPRGFYRDFGLSRNVIREMAHEGLLPGVVKSSW.

The protein belongs to the universal ribosomal protein uS14 family. Part of the 30S ribosomal subunit. Contacts proteins S3 and S10.

Its function is as follows. Binds 16S rRNA, required for the assembly of 30S particles and may also be responsible for determining the conformation of the 16S rRNA at the A site. The polypeptide is Small ribosomal subunit protein uS14 (Trichodesmium erythraeum (strain IMS101)).